Reading from the N-terminus, the 156-residue chain is DNA mismatch endonuclease Vsr (156 aa).

2 residues coordinate Mg(2+): D51 and T63.

It belongs to the Vsr family. Requires Mg(2+) as cofactor. The cofactor is Zn(2+).

Functionally, deamination of 5-methylcytosine in DNA results in T/G mismatches. If unrepaired, these mismatches can lead to C-to-T transition mutations. The very short patch (VSP) repair process in E.coli counteracts the mutagenic process by repairing the mismatches in favor of the G-containing strand. This enzyme is an endonuclease that nicks double-stranded DNA within the sequence CT(AT)GN or NT(AT)GG next to the thymidine residue that is mismatched to 2'-deoxyguanosine. The incision is mismatch-dependent and strand-specific. This is DNA mismatch endonuclease Vsr from Escherichia coli (strain K12).